A 346-amino-acid chain; its full sequence is Holliday junction branch migration complex subunit RuvB (346 aa).

The segment at 1-182 (MSEPARLISP…FGIPVRLSFY (182 aa)) is large ATPase domain (RuvB-L). ATP-binding positions include leucine 21, arginine 22, glycine 63, lysine 66, threonine 67, threonine 68, 129–131 (EDF), arginine 172, tyrosine 182, and arginine 219. Threonine 67 is a binding site for Mg(2+). The interval 183-253 (TVEELELIVR…IADEALTRLL (71 aa)) is small ATPAse domain (RuvB-S). Residues 256–346 (NVGFDQLDKR…AQFRLFQEDD (91 aa)) are head domain (RuvB-H). Arginine 292, arginine 311, and arginine 316 together coordinate DNA.

Belongs to the RuvB family. In terms of assembly, homohexamer. Forms an RuvA(8)-RuvB(12)-Holliday junction (HJ) complex. HJ DNA is sandwiched between 2 RuvA tetramers; dsDNA enters through RuvA and exits via RuvB. An RuvB hexamer assembles on each DNA strand where it exits the tetramer. Each RuvB hexamer is contacted by two RuvA subunits (via domain III) on 2 adjacent RuvB subunits; this complex drives branch migration. In the full resolvosome a probable DNA-RuvA(4)-RuvB(12)-RuvC(2) complex forms which resolves the HJ.

It localises to the cytoplasm. It carries out the reaction ATP + H2O = ADP + phosphate + H(+). Functionally, the RuvA-RuvB-RuvC complex processes Holliday junction (HJ) DNA during genetic recombination and DNA repair, while the RuvA-RuvB complex plays an important role in the rescue of blocked DNA replication forks via replication fork reversal (RFR). RuvA specifically binds to HJ cruciform DNA, conferring on it an open structure. The RuvB hexamer acts as an ATP-dependent pump, pulling dsDNA into and through the RuvAB complex. RuvB forms 2 homohexamers on either side of HJ DNA bound by 1 or 2 RuvA tetramers; 4 subunits per hexamer contact DNA at a time. Coordinated motions by a converter formed by DNA-disengaged RuvB subunits stimulates ATP hydrolysis and nucleotide exchange. Immobilization of the converter enables RuvB to convert the ATP-contained energy into a lever motion, pulling 2 nucleotides of DNA out of the RuvA tetramer per ATP hydrolyzed, thus driving DNA branch migration. The RuvB motors rotate together with the DNA substrate, which together with the progressing nucleotide cycle form the mechanistic basis for DNA recombination by continuous HJ branch migration. Branch migration allows RuvC to scan DNA until it finds its consensus sequence, where it cleaves and resolves cruciform DNA. The polypeptide is Holliday junction branch migration complex subunit RuvB (Rhizobium etli (strain CIAT 652)).